Consider the following 1264-residue polypeptide: ATP-dependent helicase/nuclease subunit A (1264 aa).

The UvrD-like helicase ATP-binding domain occupies 12 to 482 (EQFTDSQWQA…IILAENFRSR (471 aa)). 33–40 (ASAGSGKT) lines the ATP pocket. The region spanning 520-808 (SEAADYSTEL…RVMTIHASKG (289 aa)) is the UvrD-like helicase C-terminal domain.

The protein belongs to the helicase family. AddA subfamily. As to quaternary structure, heterodimer of AddA and AddB/RexB. Mg(2+) serves as cofactor.

The catalysed reaction is Couples ATP hydrolysis with the unwinding of duplex DNA by translocating in the 3'-5' direction.. It catalyses the reaction ATP + H2O = ADP + phosphate + H(+). Functionally, the heterodimer acts as both an ATP-dependent DNA helicase and an ATP-dependent, dual-direction single-stranded exonuclease. Recognizes the chi site generating a DNA molecule suitable for the initiation of homologous recombination. The AddA nuclease domain is required for chi fragment generation; this subunit has the helicase and 3' -&gt; 5' nuclease activities. The polypeptide is ATP-dependent helicase/nuclease subunit A (Enterococcus faecalis (strain ATCC 700802 / V583)).